A 549-amino-acid polypeptide reads, in one-letter code: Lipase 3 (549 aa).

The signal sequence occupies residues 1–15 (MKLALALSLIASVAA). Residues cysteine 75 and cysteine 112 are joined by a disulfide bond. Serine 224 acts as the Acyl-ester intermediate in catalysis. Cysteine 283 and cysteine 292 are oxidised to a cystine. N-linked (GlcNAc...) asparagine glycosylation is present at asparagine 329. Residue glutamate 356 is the Charge relay system of the active site. The N-linked (GlcNAc...) asparagine glycan is linked to asparagine 366. Catalysis depends on histidine 464, which acts as the Charge relay system.

It belongs to the type-B carboxylesterase/lipase family. Monomer and homodimer.

The catalysed reaction is a triacylglycerol + H2O = a diacylglycerol + a fatty acid + H(+). The polypeptide is Lipase 3 (LIP3) (Diutina rugosa (Yeast)).